The chain runs to 624 residues: LRR receptor kinase BAK1 (624 aa).

Positions methionine 1–alanine 25 are cleaved as a signal peptide. Residues asparagine 26 to glycine 237 lie on the Extracellular side of the membrane. LRR repeat units lie at residues leucine 91–leucine 115, asparagine 117–leucine 139, leucine 140–isoleucine 163, and threonine 164–leucine 188. 5 N-linked (GlcNAc...) asparagine glycosylation sites follow: asparagine 103, asparagine 114, asparagine 127, asparagine 149, and asparagine 175. Residues threonine 205 to threonine 236 are disordered. A compositionally biased stretch (pro residues) spans proline 210–valine 227. Residues alanine 238–phenylalanine 258 form a helical membrane-spanning segment. Over alanine 259–arginine 624 the chain is Cytoplasmic. In terms of domain architecture, Protein kinase spans phenylalanine 301–glutamine 588. ATP contacts are provided by residues leucine 307–valine 315 and lysine 329. The active-site Proton acceptor is aspartate 428.

The protein belongs to the protein kinase superfamily. Ser/Thr protein kinase family. As to quaternary structure, forms homodimers. Interacts with BRI1. Interacts with REM4.1. In terms of tissue distribution, expressed in developing lateral roots, shoot apex, leaf blades, lamina joints and flowers. Expressed at low levels in leaf sheaths and panicles.

It localises to the cell membrane. It catalyses the reaction L-seryl-[protein] + ATP = O-phospho-L-seryl-[protein] + ADP + H(+). The catalysed reaction is L-threonyl-[protein] + ATP = O-phospho-L-threonyl-[protein] + ADP + H(+). In terms of biological role, LRR receptor kinase involved in defense response. Does not seem to be required specifically for XA21-mediated immunity or basal resistance to Xanthomonas oryzae pv. oryzae (Xoo), or immunity to Magnaporthe oryzae. Involved in brassinosteroid (BR) signaling pathway. Acts as a coreceptor of BRI1. Forms at the plasma membrane a receptor complex with BRI1 which is activated in response to brassinolide. Phosphorylates BRI1. Required for normal plant growth and leaf development. Possesses kinase activity in vitro. This Oryza sativa subsp. japonica (Rice) protein is LRR receptor kinase BAK1.